The sequence spans 122 residues: Serum amyloid A-3 protein (122 aa).

Positions 1-18 (MKPFLAIIFCFLILGVDS) are cleaved as a signal peptide. A disordered region spans residues 100–122 (ANKWGRSGKDPNHFRPAGLPSKY).

Belongs to the SAA family. Expressed by the liver; secreted in plasma.

The protein resides in the secreted. Major acute phase reactant. Apolipoprotein of the HDL complex. In vitro exhibits antimicrobial activity against Escherichia coli, Streptococcus uberis and Pseudomonas aeruginosa. The protein is Serum amyloid A-3 protein (SAA3) of Mesocricetus auratus (Golden hamster).